The chain runs to 184 residues: ADP-ribosylation factor-like protein 2 (184 aa).

A lipid anchor (N-myristoyl glycine) is attached at glycine 2. Residues 23-30 (GLDNAGKT), 66-70 (DVGGQ), and 125-128 (NKQD) each bind GTP.

The protein belongs to the small GTPase superfamily. Arf family. In terms of tissue distribution, ubiquitously expressed.

Its function is as follows. GTP-binding protein involved in protein trafficking; may modulate vesicle budding and uncoating within the Golgi apparatus. The protein is ADP-ribosylation factor-like protein 2 (Arl2) of Drosophila melanogaster (Fruit fly).